Here is a 250-residue protein sequence, read N- to C-terminus: Probable transcriptional regulatory protein ckrop_1032 (250 aa).

Positions 1 to 22 (MSGHSKWATTKHKKAANDAKRG) are disordered.

It belongs to the TACO1 family.

It is found in the cytoplasm. The chain is Probable transcriptional regulatory protein ckrop_1032 from Corynebacterium kroppenstedtii (strain DSM 44385 / JCM 11950 / CIP 105744 / CCUG 35717).